Reading from the N-terminus, the 163-residue chain is Putative 4-hydroxy-4-methyl-2-oxoglutarate aldolase (163 aa).

Residues glycine 76–isoleucine 79 and arginine 98 contribute to the substrate site. Residue aspartate 99 participates in a divalent metal cation binding.

The protein belongs to the class II aldolase/RraA-like family. Homotrimer. Requires a divalent metal cation as cofactor.

It carries out the reaction 4-hydroxy-4-methyl-2-oxoglutarate = 2 pyruvate. It catalyses the reaction oxaloacetate + H(+) = pyruvate + CO2. In terms of biological role, catalyzes the aldol cleavage of 4-hydroxy-4-methyl-2-oxoglutarate (HMG) into 2 molecules of pyruvate. Also contains a secondary oxaloacetate (OAA) decarboxylase activity due to the common pyruvate enolate transition state formed following C-C bond cleavage in the retro-aldol and decarboxylation reactions. This is Putative 4-hydroxy-4-methyl-2-oxoglutarate aldolase from Pseudomonas fluorescens.